A 425-amino-acid polypeptide reads, in one-letter code: COBRA-like protein 4 (425 aa).

A signal peptide spans 1 to 27 (MAIGVGGCCAVLLAAALLFSSPATTYA). N-linked (GlcNAc...) asparagine glycans are attached at residues N36, N163, N171, N319, and N352.

It belongs to the COBRA family.

This is COBRA-like protein 4 (BC1L9) from Oryza sativa subsp. japonica (Rice).